The primary structure comprises 396 residues: E3 ubiquitin-protein transferase MAEA (396 aa).

The tract at residues 1–124 (MAVQESAAQL…AAASVWKRKR (124 aa)) is extracellular and involved in cell to cell contact. Residue Thr28 is modified to Phosphothreonine. The region spanning 121–153 (KRKRMDRMMVEHLLRCGYYNTAVKLARQSGIED) is the LisH domain. The CTLH domain maps to 159 to 216 (MFLTAKEVEESLERRETATCLAWCHDNKSRLRKMKSCLEFSLRIQEFIELIRQNKRLD). An RING-Gid-type zinc finger spans residues 314–381 (CPVCSRSLNK…QDDKVVCPRT (68 aa)).

As to quaternary structure, identified in the CTLH complex that contains GID4, RANBP9 and/or RANBP10, MKLN1, MAEA, RMND5A (or alternatively its paralog RMND5B), GID8, ARMC8, WDR26 and YPEL5. Within this complex, MAEA, RMND5A (or alternatively its paralog RMND5B), GID8, WDR26, and RANBP9 and/or RANBP10 form the catalytic core, while GID4, MKLN1, ARMC8 and YPEL5 have ancillary roles. Interacts with F-actin. In terms of processing, autoubiquitinated as component of the CTLH E3 ubiquitin-protein ligase complex (in vitro).

It localises to the cytoplasm. It is found in the nucleus. The protein localises to the nucleoplasm. The protein resides in the nucleus matrix. Its subcellular location is the cell membrane. It localises to the cytoskeleton. The catalysed reaction is S-ubiquitinyl-[E2 ubiquitin-conjugating enzyme]-L-cysteine + [acceptor protein]-L-lysine = [E2 ubiquitin-conjugating enzyme]-L-cysteine + N(6)-ubiquitinyl-[acceptor protein]-L-lysine.. Core component of the CTLH E3 ubiquitin-protein ligase complex that selectively accepts ubiquitin from UBE2H and mediates ubiquitination and subsequent proteasomal degradation of the transcription factor HBP1. MAEA and RMND5A are both required for catalytic activity of the CTLH E3 ubiquitin-protein ligase complex. MAEA is required for normal cell proliferation. The CTLH E3 ubiquitin-protein ligase complex is not required for the degradation of enzymes involved in gluconeogenesis, such as FBP1. Plays a role in erythroblast enucleation during erythrocyte maturation and in the development of mature macrophages. Mediates the attachment of erythroid cell to mature macrophages; this MAEA-mediated contact inhibits erythroid cell apoptosis. Participates in erythroblastic island formation, which is the functional unit of definitive erythropoiesis. Associates with F-actin to regulate actin distribution in erythroblasts and macrophages. May contribute to nuclear architecture and cells division events. The sequence is that of E3 ubiquitin-protein transferase MAEA (MAEA) from Pongo abelii (Sumatran orangutan).